The following is a 508-amino-acid chain: MSSISIDEKLKDPESVQNKEILDVDVGDLSPKGVDAAFNYALDVDYDEIDPETERRLVRKIDCTIFPVMCLVYCIQFLDKTSNSYAVIMGLKEDLKMEGQMYSWSGTAFYLGYLVFEFPASLLLQRFPLSKTLCVFLVIWGFLLCMTSVANYPGFIALRVLLGMMESAASPGFILLTAQWYKRSEQQLRTSVWVAFNGLGQILGSCMAYGLAKRTSLPMRGWKLIFIICGVLAIFLGFVILAVVPDNPFKAWFLTEEDRKLVVKRLRANKQGVGNNHFKLYQFKETMLDIRTWIMFVSSVLLNIPNGGIGTFSSLLIKGTMGYDTLQTLLMGLPAGACEFGGLIAFGFLSLFIHKRMVLATITTCIALIGSCLLSFAGPPRAQLAGYYLLMVSPGAMIVMFAIISSNASGYTKKVTVGVIYLIGYCVGNLIGPQTFKAADAPEYMPAKNTMVGCYAATLVTFPALYYVNWRENKRRDQLAAEGKIEHRPNAEFEDLTDFENLDFRYTL.

12 helical membrane passes run 65–87 (IFPV…SYAV), 104–124 (WSGT…SLLL), 136–156 (FLVI…PGFI), 160–180 (VLLG…TAQW), 192–212 (VWVA…YGLA), 224–244 (LIFI…LAVV), 292–312 (TWIM…IGTF), 333–353 (LPAG…SLFI), 357–377 (MVLA…LSFA), 384–404 (LAGY…FAII), 416–436 (TVGV…PQTF), and 450–470 (TMVG…YVNW).

This sequence belongs to the major facilitator superfamily. Allantoate permease family.

Its subcellular location is the endoplasmic reticulum. It localises to the golgi apparatus. It is found in the membrane. This is an uncharacterized protein from Schizosaccharomyces pombe (strain 972 / ATCC 24843) (Fission yeast).